The sequence spans 72 residues: Guanine nucleotide-binding protein subunit gamma (72 aa).

The segment at 32–72 (MVSVAPPKANPSVSSKTKQQQHFKPGKATKDKATTKCCTIS) is disordered. Cys-68 is lipidated: S-palmitoyl cysteine. Cysteine methyl ester is present on Cys-69. The S-farnesyl cysteine moiety is linked to residue Cys-69. Residues 70–72 (TIS) constitute a propeptide, removed in mature form.

The protein belongs to the G protein gamma family. As to quaternary structure, g proteins are composed of 3 units, alpha, beta and gamma. Binding of the beta-gamma subunit complex (git5-git11) to the alpha subunit (gpa2) facilitates interaction with GPCR git3.

It is found in the cell membrane. Gamma subunit of the heterotrimeric guanine nucleotide-binding protein (G protein) involved in glucose-induced cAMP signaling. The beta-gamma subunits (git5-git11) promote binding of the alpha subunit gpa2 to GPCR git3, which senses extracellular glucose, to activate cAMP-PKA signaling and repress sexual development and gluconeogenesis. The chain is Guanine nucleotide-binding protein subunit gamma (git11) from Schizosaccharomyces pombe (strain 972 / ATCC 24843) (Fission yeast).